We begin with the raw amino-acid sequence, 645 residues long: Threonine--tRNA ligase (645 aa).

A TGS domain is found at 3-64 (DMINITFPDG…EQDGTITIVT (62 aa)). The interval 247-544 (DHRKLGKELG…LLEEYKGAFP (298 aa)) is catalytic. The Zn(2+) site is built by Cys-340, His-391, and His-521.

It belongs to the class-II aminoacyl-tRNA synthetase family. As to quaternary structure, homodimer. Requires Zn(2+) as cofactor.

The protein localises to the cytoplasm. It catalyses the reaction tRNA(Thr) + L-threonine + ATP = L-threonyl-tRNA(Thr) + AMP + diphosphate + H(+). Its function is as follows. Catalyzes the attachment of threonine to tRNA(Thr) in a two-step reaction: L-threonine is first activated by ATP to form Thr-AMP and then transferred to the acceptor end of tRNA(Thr). Also edits incorrectly charged L-seryl-tRNA(Thr). The chain is Threonine--tRNA ligase from Halalkalibacterium halodurans (strain ATCC BAA-125 / DSM 18197 / FERM 7344 / JCM 9153 / C-125) (Bacillus halodurans).